Consider the following 428-residue polypeptide: Trigger factor (428 aa).

The 86-residue stretch at 163-248 (KDIVTIDFEG…VKEIKAKELP (86 aa)) folds into the PPIase FKBP-type domain.

This sequence belongs to the FKBP-type PPIase family. Tig subfamily.

The protein localises to the cytoplasm. It carries out the reaction [protein]-peptidylproline (omega=180) = [protein]-peptidylproline (omega=0). Its function is as follows. Involved in protein export. Acts as a chaperone by maintaining the newly synthesized protein in an open conformation. Functions as a peptidyl-prolyl cis-trans isomerase. This chain is Trigger factor, found in Lachnoclostridium phytofermentans (strain ATCC 700394 / DSM 18823 / ISDg) (Clostridium phytofermentans).